The primary structure comprises 283 residues: Small ribosomal subunit protein uS3 (283 aa).

The region spanning 39 to 107 is the KH type-2 domain; the sequence is VRAYLKTKLK…PVHVNIEEIR (69 aa). Residues 209 to 283 form a disordered region; the sequence is PSGEPPVDLT…GAVPAEKAGE (75 aa). Residues 217-235 are compositionally biased toward basic and acidic residues; sequence LTKEDDTKRRGPRRDDGKP. Over residues 244 to 260 the composition is skewed to low complexity; the sequence is PEGQPGAAAAPGAAPAA.

The protein belongs to the universal ribosomal protein uS3 family. Part of the 30S ribosomal subunit. Forms a tight complex with proteins S10 and S14.

Its function is as follows. Binds the lower part of the 30S subunit head. Binds mRNA in the 70S ribosome, positioning it for translation. This Herminiimonas arsenicoxydans protein is Small ribosomal subunit protein uS3.